A 290-amino-acid polypeptide reads, in one-letter code: MNEEEQFVSIDLNDDNICSVCKLGTDKDTLSFCHICFELNLEGVPKSNLLHTKSVRGHKDCFEKYHLIANQDCSRSKLSKSTYEGVKTIVSKKINWIVQYAQNKNLDLESECSKTSQHPLLNFRHKPEKKLLPQFDSQVPKYSAKGSAGNAGSISSYAQRILEHRENTDFRLGLLEDADALWTHSHSQAQKTEETSSGPEGTIQTQNPHYSREELNSMTLAEVVQLSAKLQQRIQEVFEELTHQVQEKDSLASELHVRHVAIEQLLKNCSKLPCLQVGRTGTRSHLPMNH.

The segment at 185–206 (SHSQAQKTEETSSGPEGTIQTQ) is disordered. Positions 228 to 251 (AKLQQRIQEVFEELTHQVQEKDSL) form a coiled coil.

This sequence belongs to the EURL family. As to quaternary structure, interacts with CCDC85B. In terms of tissue distribution, expressed in brain (at protein level). Expressed in neural progenitor cells and postmitotic neurons of the embryonic cerebral cortex.

Its function is as follows. Plays a role in cortical progenitor cell proliferation and differentiation. Promotes dendritic spine development of post-migratory cortical projection neurons by modulating the beta-catenin signaling pathway. The polypeptide is Protein EURL homolog (Mus musculus (Mouse)).